The primary structure comprises 790 residues: Transient receptor potential cation channel subfamily V member 3 (790 aa).

Over 1–430 the chain is Cytoplasmic; the sequence is MKAHPKEMVP…TLEPLHTLLH (430 aa). Disordered regions lie at residues 15-34, 52-71, and 76-112; these read RVAAPSGNPAILPEKRPAEI, PNPTVAKTSPPVFSKPMDSN, and ISGNCDDMDSPQSPQDDVTETPSNPNSPSAQLAKEEQ. A compositionally biased stretch (polar residues) spans 95–105; that stretch reads ETPSNPNSPSA. ANK repeat units lie at residues 117–148, 170–198, 214–243, 261–291, 298–330, 340–362, and 398–420; these read RRLKKRIFAAVSEGCVEELVELLVELQELCRR, TCLMKALLNINPNTKEIVRILLAFAEEND, EGQTALNIAIERRQGDIAALLIAAGADVNA, FGETPLALAACTNQPEIVQLLMEHEQTDITS, NILHALVTVAEDFKTQNDFVKRMYDMILLRSGN, DGLTPLQLAAKMGKAEILKYILS, and TTDNSVLEITVYNTNIDNRHEML. Residues 431 to 460 traverse the membrane as a helical segment; it reads MKWKKFAKHMFFLSFCFYFFYNITLTLVSY. Over 461 to 479 the chain is Extracellular; the sequence is YRPREEEAIPHPLALTHKM. A helical transmembrane segment spans residues 480–508; that stretch reads GWLQLLGRMFVLIWAMCISVKEGIAIFLL. The Cytoplasmic portion of the chain corresponds to 509–519; that stretch reads RPSDLQSILSD. The chain crosses the membrane as a helical span at residues 520–540; that stretch reads AWFHFVFFIQAVLVILSVFLY. Residues 541–545 are Extracellular-facing; it reads LFAYK. A helical transmembrane segment spans residues 546-566; sequence EYLACLVLAMALGWANMLYYT. Over 567-569 the chain is Cytoplasmic; the sequence is RGF. The chain crosses the membrane as a helical span at residues 570-608; that stretch reads QSMGMYSVMIQKVILHDVLKFLFVYIVFLLGFGVALASL. The Extracellular portion of the chain corresponds to 609-620; that stretch reads IEKCPKDNKDCS. Positions 621-646 form an intramembrane region, pore-forming; sequence SYGSFSDAVLELFKLTIGLGDLNIQQ. G638 is a Na(+) binding site. The Extracellular portion of the chain corresponds to 647–649; it reads NSK. The chain crosses the membrane as a helical span at residues 650–686; that stretch reads YPILFLFLLITYVILTFVLLLNMLIALMGETVENVSK. At 687–790 the chain is on the cytoplasmic side; that stretch reads ESERIWRLQR…EVEEFPETSV (104 aa).

This sequence belongs to the transient receptor (TC 1.A.4) family. TrpV subfamily. TRPV3 sub-subfamily. In terms of assembly, homotetramer. May convert from a homotetramer to a homopentamer to allow pore dilation. Interacts with TRPV1; may form a heteromeric channel with TRPV1. Interacts with SNX11; this interaction promotes TRPV3 trafficking from the cell membrane to lysosome for degradation. Abundantly expressed in CNS. Widely expressed at low levels. Detected in dorsal root ganglion (at protein level). Expressed in the keratinocyte layers of the outer root sheath and, to lesser extent, to the matrix of the hair follicles (at protein level).

It is found in the cell membrane. Its subcellular location is the cytoplasm. It localises to the lysosome. It catalyses the reaction Ca(2+)(in) = Ca(2+)(out). It carries out the reaction Mg(2+)(in) = Mg(2+)(out). The enzyme catalyses Na(+)(in) = Na(+)(out). The catalysed reaction is K(+)(in) = K(+)(out). Activated by cannabinoid that binds to the vanilloid binding pocket. Diphenylboronic anhydride induces pore dilation and enhances cation permeability by promoting the conversion to a homopentamer. Functionally, non-selective calcium permeant cation channel. It is activated by innocuous (warm) temperatures and shows an increased response at noxious temperatures greater than 39 degrees Celsius. Activation exhibits an outward rectification. The channel pore can dilate to provide permeability to larger cations. May associate with TRPV1 and may modulate its activity. Is a negative regulator of hair growth and cycling: TRPV3-coupled signaling suppresses keratinocyte proliferation in hair follicles and induces apoptosis and premature hair follicle regression (catagen). This Homo sapiens (Human) protein is Transient receptor potential cation channel subfamily V member 3 (TRPV3).